We begin with the raw amino-acid sequence, 64 residues long: MMVPVRCFTCGTVVGEHWGEFKERAREGDEDPAEVLDELGVERACCRRMLVSHKDLVDIVSPYQ.

Zn(2+) contacts are provided by cysteine 7, cysteine 10, cysteine 45, and cysteine 46.

It belongs to the archaeal Rpo10/eukaryotic RPB10 RNA polymerase subunit family. In terms of assembly, part of the RNA polymerase complex. The cofactor is Zn(2+).

The protein resides in the cytoplasm. The catalysed reaction is RNA(n) + a ribonucleoside 5'-triphosphate = RNA(n+1) + diphosphate. DNA-dependent RNA polymerase (RNAP) catalyzes the transcription of DNA into RNA using the four ribonucleoside triphosphates as substrates. This chain is DNA-directed RNA polymerase subunit Rpo10, found in Natronomonas pharaonis (strain ATCC 35678 / DSM 2160 / CIP 103997 / JCM 8858 / NBRC 14720 / NCIMB 2260 / Gabara) (Halobacterium pharaonis).